We begin with the raw amino-acid sequence, 209 residues long: Protein GrpE (209 aa).

Residues 1-63 form a disordered region; sequence MKKSRKKENM…NPEEACREEN (63 aa). Composition is skewed to basic and acidic residues over residues 7-42 and 50-63; these read KENM…KVSP and EAEK…REEN.

The protein belongs to the GrpE family. Homodimer.

The protein resides in the cytoplasm. Its function is as follows. Participates actively in the response to hyperosmotic and heat shock by preventing the aggregation of stress-denatured proteins, in association with DnaK and GrpE. It is the nucleotide exchange factor for DnaK and may function as a thermosensor. Unfolded proteins bind initially to DnaJ; upon interaction with the DnaJ-bound protein, DnaK hydrolyzes its bound ATP, resulting in the formation of a stable complex. GrpE releases ADP from DnaK; ATP binding to DnaK triggers the release of the substrate protein, thus completing the reaction cycle. Several rounds of ATP-dependent interactions between DnaJ, DnaK and GrpE are required for fully efficient folding. The protein is Protein GrpE of Methanosarcina mazei (strain ATCC BAA-159 / DSM 3647 / Goe1 / Go1 / JCM 11833 / OCM 88) (Methanosarcina frisia).